Consider the following 139-residue polypeptide: Heavy metal-associated isoprenylated plant protein 13 (139 aa).

Residues 3 to 70 (PMKAVLQLSI…LCNTELVSVE (68 aa)) form the HMA domain. A disordered region spans residues 70 to 94 (EVVKPPEKKPEPEKPAPPKPAPAPA). Residues 73–85 (KPPEKKPEPEKPA) show a composition bias toward basic and acidic residues. C136 bears the Cysteine methyl ester mark. A lipid anchor (S-farnesyl cysteine) is attached at C136. A propeptide spans 137 to 139 (VIM) (removed in mature form).

It belongs to the HIPP family.

Probable heavy-metal-binding protein. The protein is Heavy metal-associated isoprenylated plant protein 13 of Arabidopsis thaliana (Mouse-ear cress).